A 756-amino-acid polypeptide reads, in one-letter code: NUT family member 2F (756 aa).

Disordered regions lie at residues 173–200, 293–438, 511–639, and 653–756; these read GNARPWPQGAHGEGSLAPSQAKARPDDS, IQKS…TSDP, RAAP…LPGM, and RLSQ…HCSQ. A compositionally biased stretch (pro residues) spans 304–321; sequence SLPPPAPPRLEPRGPPAP. The segment covering 417-427 has biased composition (basic and acidic residues); sequence EGQREKGKVEQ. Residues 543 to 560 are compositionally biased toward polar residues; that stretch reads QRVSVETSPPQTAAQDPQ. Residues 654-665 show a composition bias toward low complexity; the sequence is LSQSPVPSSGLL. Basic residues predominate over residues 746–756; that stretch reads SRRKKKRHCSQ.

Belongs to the NUT family.

The polypeptide is NUT family member 2F (NUTM2F) (Homo sapiens (Human)).